The chain runs to 221 residues: Germin-like protein subfamily 1 member 19 (221 aa).

Residues 1–21 (MKVSMSLILITLSALVTIAKA) form the signal peptide. Cysteine 31 and cysteine 48 are joined by a disulfide. Positions 76–213 (SNVTTVNVDQ…AFQLDVNVVK (138 aa)) constitute a Cupin type-1 domain. An N-linked (GlcNAc...) asparagine glycan is attached at asparagine 77. 4 residues coordinate Mn(2+): histidine 110, histidine 112, glutamate 117, and histidine 159.

This sequence belongs to the germin family. Oligomer (believed to be a pentamer but probably hexamer).

The protein localises to the secreted. The protein resides in the extracellular space. It is found in the apoplast. In terms of biological role, may play a role in plant defense. Probably has no oxalate oxidase activity even if the active site is conserved. The chain is Germin-like protein subfamily 1 member 19 from Arabidopsis thaliana (Mouse-ear cress).